A 248-amino-acid chain; its full sequence is Type II methyltransferase M.AquIA (248 aa).

Positions 3–248 (KKLISLFSGA…IKDRIKNHGY (246 aa)) constitute an SAM-dependent MTase C5-type domain. Cys-82 is a catalytic residue.

This sequence belongs to the class I-like SAM-binding methyltransferase superfamily. C5-methyltransferase family. As to quaternary structure, heterodimer of an alpha and a beta subunit.

The enzyme catalyses a 2'-deoxycytidine in DNA + S-adenosyl-L-methionine = a 5-methyl-2'-deoxycytidine in DNA + S-adenosyl-L-homocysteine + H(+). A methylase, recognizes the double-stranded sequence 5'-CYCGRG-3', methylates C-1 on both strands, and protects the DNA from cleavage by the AquI endonuclease. This Picosynechococcus sp. (strain ATCC 27264 / PCC 7002 / PR-6) (Agmenellum quadruplicatum) protein is Type II methyltransferase M.AquIA (aquIMA).